We begin with the raw amino-acid sequence, 463 residues long: Glutathione amide reductase (463 aa).

Ni(2+) is bound by residues Thr2, Gln3, and His4. FAD is bound by residues Ser14 to Gly15, Glu34, and Thr41. A disulfide bond links Cys42 and Cys47. FAD-binding positions include Lys50 and His113–Ala114. Lys50 is a binding site for NAD(+). NAD(+) is bound by residues Ala174–Glu180, Leu197–Glu198, Val230, and Gly261. FAD-binding positions include Asp302 and Gln308–Thr310. Positions 308 and 341 each coordinate NAD(+). An FAD-binding site is contributed by His437. The Proton acceptor role is filled by His437.

It belongs to the class-I pyridine nucleotide-disulfide oxidoreductase family. In terms of assembly, homodimer. FAD serves as cofactor.

The catalysed reaction is 2 glutathione amide + NAD(+) = glutathione amide disulfide + NADH + H(+). Catalyzes the reduction of glutathione amide disulfide (GASSAG) to restore glutathione amide (GASH) in the presence of NADH. May play a role in GASH metabolism under anaerobic conditions as a sulfide carrier necessary for cytoplasmic sulfide oxidation. The protein is Glutathione amide reductase of Marichromatium gracile (Chromatium gracile).